Reading from the N-terminus, the 469-residue chain is Cysteine--tRNA ligase (469 aa).

Cys-28 provides a ligand contact to Zn(2+). The short motif at 30 to 40 (PTVYNYIHIGN) is the 'HIGH' region element. Zn(2+) is bound by residues Cys-213, His-238, and Glu-242. The short motif at 270-274 (KMSKS) is the 'KMSKS' region element. ATP is bound at residue Lys-273.

Belongs to the class-I aminoacyl-tRNA synthetase family. In terms of assembly, monomer. It depends on Zn(2+) as a cofactor.

The protein localises to the cytoplasm. It carries out the reaction tRNA(Cys) + L-cysteine + ATP = L-cysteinyl-tRNA(Cys) + AMP + diphosphate. In Leuconostoc citreum (strain KM20), this protein is Cysteine--tRNA ligase.